The following is a 240-amino-acid chain: Phosducin-like protein 2 (240 aa).

One can recognise a Phosducin domain in the interval 54–214 (QRDKKIDDMS…MLGQAGAVPT (161 aa)). 2 positions are modified to phosphoserine: S63 and S73. Residues 99-240 (FGSVREISGQ…DLEDKSSDFY (142 aa)) are thioredoxin fold.

The protein belongs to the phosducin family.

Its subcellular location is the cytoplasm. In terms of biological role, modulates the activation of caspases during apoptosis. The chain is Phosducin-like protein 2 from Drosophila melanogaster (Fruit fly).